A 260-amino-acid chain; its full sequence is Pyridoxine 5'-phosphate synthase (260 aa).

2 residues coordinate 3-amino-2-oxopropyl phosphate: asparagine 10 and arginine 21. Catalysis depends on histidine 46, which acts as the Proton acceptor. 1-deoxy-D-xylulose 5-phosphate contacts are provided by arginine 48 and histidine 53. The active-site Proton acceptor is glutamate 76. Threonine 113 contacts 1-deoxy-D-xylulose 5-phosphate. The active-site Proton donor is histidine 204. 3-amino-2-oxopropyl phosphate is bound by residues aspartate 205 and 227 to 228 (GH).

It belongs to the PNP synthase family. Homooctamer; tetramer of dimers.

It is found in the cytoplasm. The enzyme catalyses 3-amino-2-oxopropyl phosphate + 1-deoxy-D-xylulose 5-phosphate = pyridoxine 5'-phosphate + phosphate + 2 H2O + H(+). The protein operates within cofactor biosynthesis; pyridoxine 5'-phosphate biosynthesis; pyridoxine 5'-phosphate from D-erythrose 4-phosphate: step 5/5. Its function is as follows. Catalyzes the complicated ring closure reaction between the two acyclic compounds 1-deoxy-D-xylulose-5-phosphate (DXP) and 3-amino-2-oxopropyl phosphate (1-amino-acetone-3-phosphate or AAP) to form pyridoxine 5'-phosphate (PNP) and inorganic phosphate. The sequence is that of Pyridoxine 5'-phosphate synthase from Xylella fastidiosa (strain M23).